The following is a 365-amino-acid chain: 2-aminoethylphosphonate--pyruvate transaminase (365 aa).

Lys194 carries the post-translational modification N6-(pyridoxal phosphate)lysine.

Belongs to the class-V pyridoxal-phosphate-dependent aminotransferase family. PhnW subfamily. In terms of assembly, homodimer. Pyridoxal 5'-phosphate is required as a cofactor.

The catalysed reaction is (2-aminoethyl)phosphonate + pyruvate = phosphonoacetaldehyde + L-alanine. Functionally, involved in phosphonate degradation. This Bacillus thuringiensis (strain Al Hakam) protein is 2-aminoethylphosphonate--pyruvate transaminase.